Reading from the N-terminus, the 281-residue chain is 39kDa core protein OPG130 (281 aa).

The segment covering Met1–Tyr22 has biased composition (polar residues). Disordered regions lie at residues Met1 to Lys33, Leu93 to Asp112, and Asn149 to Pro188. Positions Ser24 to Lys33 are enriched in basic and acidic residues. Polar residues predominate over residues Pro94 to Asp112. Positions Thr154–Ser175 are enriched in low complexity.

This sequence belongs to the orthopoxvirus OPG130 family. As to quaternary structure, interacts with OPG136 and its cleaved form. Its phosphorylation state is regulated by the OPG054 kinase and the OPG106 phosphatase.

The protein resides in the virion. It localises to the host endoplasmic reticulum-Golgi intermediate compartment membrane. Its function is as follows. Component of the virion core. Participates in virion assembly. In Vaccinia virus (strain Western Reserve) (VACV), this protein is 39kDa core protein OPG130 (OPG130).